A 110-amino-acid chain; its full sequence is Small ribosomal subunit protein bS16 (110 aa).

Residues 84–110 (KRTARNNPEKAVPRKERKAQAEAAAKS) are disordered. Positions 90-103 (NPEKAVPRKERKAQ) are enriched in basic and acidic residues.

Belongs to the bacterial ribosomal protein bS16 family.

This is Small ribosomal subunit protein bS16 from Nitrobacter hamburgensis (strain DSM 10229 / NCIMB 13809 / X14).